The primary structure comprises 523 residues: Sucrose 6(F)-phosphate phosphorylase (523 aa).

Sucrose 6(F)-phosphate-binding positions include Asp58, His96, 221 to 223, Glu264, 326 to 327, and Lys434; these read RLD and HD. Asp223 functions as the Nucleophile in the catalytic mechanism. Glu264 functions as the Proton donor/acceptor in the catalytic mechanism.

It belongs to the glycosyl hydrolase 13 family. Sucrose phosphorylase subfamily. Monomer.

It catalyses the reaction sucrose 6(F)-phosphate + phosphate = beta-D-fructose 6-phosphate + alpha-D-glucose 1-phosphate. Its function is as follows. Catalyzes the reversible phosphorolysis of sucrose 6(F)-phosphate into alpha-D-glucose 1-phosphate (Glc1P) and D-fructose 6-phosphate. May be involved in a new pathway for the degradation of sucrose, which could become phosphorylated on its fructose moiety during uptake via a PTS system. Shows strict specificity since it does not catalyze reactions with alternative substrates. The polypeptide is Sucrose 6(F)-phosphate phosphorylase (Ilumatobacter coccineus (strain NBRC 103263 / KCTC 29153 / YM16-304)).